The following is a 264-amino-acid chain: Thymidylate synthase (264 aa).

Arg21 is a dUMP binding site. His51 is a binding site for (6R)-5,10-methylene-5,6,7,8-tetrahydrofolate. 126 to 127 (RR) contributes to the dUMP binding site. Cys146 (nucleophile) is an active-site residue. DUMP contacts are provided by residues 166-169 (RSAD), Asn177, and 207-209 (HLY). (6R)-5,10-methylene-5,6,7,8-tetrahydrofolate is bound at residue Asp169. Residue Ala263 participates in (6R)-5,10-methylene-5,6,7,8-tetrahydrofolate binding.

It belongs to the thymidylate synthase family. Bacterial-type ThyA subfamily. In terms of assembly, homodimer.

Its subcellular location is the cytoplasm. It carries out the reaction dUMP + (6R)-5,10-methylene-5,6,7,8-tetrahydrofolate = 7,8-dihydrofolate + dTMP. It participates in pyrimidine metabolism; dTTP biosynthesis. Functionally, catalyzes the reductive methylation of 2'-deoxyuridine-5'-monophosphate (dUMP) to 2'-deoxythymidine-5'-monophosphate (dTMP) while utilizing 5,10-methylenetetrahydrofolate (mTHF) as the methyl donor and reductant in the reaction, yielding dihydrofolate (DHF) as a by-product. This enzymatic reaction provides an intracellular de novo source of dTMP, an essential precursor for DNA biosynthesis. This chain is Thymidylate synthase, found in Cupriavidus necator (strain ATCC 17699 / DSM 428 / KCTC 22496 / NCIMB 10442 / H16 / Stanier 337) (Ralstonia eutropha).